The primary structure comprises 233 residues: MIKAVLFDVDDTLYPSSKLAEEARRNAIRAMIEAGLETDLSEEELYRELQEVVKEYGSNHPRHFDLLLRRIGADPEPKLVAAAVVAYHDTKFAYLKPYPDVIPTLMQLREMGFKLGAVTSGLAVKQWEKLIRLGIHHFFHEVVISEEIGVEKPNPKIFIEAARRLGVKPEEAVYVGDRLDKDIRGANRAGMVTVRIRRGKYQDMEPRNDDDVPDFEIDRPRELLDVVRELAKD.

It belongs to the HAD-like hydrolase superfamily. Mg(2+) is required as a cofactor.

Functionally, catalyzes the dephosphorylation of D,L-glyceraldehyde 3-phosphate in vitro. The polypeptide is Glyceraldehyde 3-phosphate phosphatase (Methanopyrus kandleri (strain AV19 / DSM 6324 / JCM 9639 / NBRC 100938)).